The primary structure comprises 274 residues: 2,3,4,5-tetrahydropyridine-2,6-dicarboxylate N-succinyltransferase (274 aa).

It belongs to the transferase hexapeptide repeat family.

The protein resides in the cytoplasm. The catalysed reaction is (S)-2,3,4,5-tetrahydrodipicolinate + succinyl-CoA + H2O = (S)-2-succinylamino-6-oxoheptanedioate + CoA. Its pathway is amino-acid biosynthesis; L-lysine biosynthesis via DAP pathway; LL-2,6-diaminopimelate from (S)-tetrahydrodipicolinate (succinylase route): step 1/3. This chain is 2,3,4,5-tetrahydropyridine-2,6-dicarboxylate N-succinyltransferase, found in Salmonella agona (strain SL483).